The chain runs to 266 residues: GTP cyclohydrolase FolE2 1 (266 aa).

Belongs to the GTP cyclohydrolase IV family.

It catalyses the reaction GTP + H2O = 7,8-dihydroneopterin 3'-triphosphate + formate + H(+). It functions in the pathway cofactor biosynthesis; 7,8-dihydroneopterin triphosphate biosynthesis; 7,8-dihydroneopterin triphosphate from GTP: step 1/1. Functionally, converts GTP to 7,8-dihydroneopterin triphosphate. The sequence is that of GTP cyclohydrolase FolE2 1 from Dechloromonas aromatica (strain RCB).